The primary structure comprises 72 residues: Translation initiation factor IF-1 (72 aa).

The S1-like domain occupies 1 to 72 (MAKEEMLEFP…TKGRINYRFK (72 aa)).

The protein belongs to the IF-1 family. As to quaternary structure, component of the 30S ribosomal translation pre-initiation complex which assembles on the 30S ribosome in the order IF-2 and IF-3, IF-1 and N-formylmethionyl-tRNA(fMet); mRNA recruitment can occur at any time during PIC assembly.

Its subcellular location is the cytoplasm. Its function is as follows. One of the essential components for the initiation of protein synthesis. Stabilizes the binding of IF-2 and IF-3 on the 30S subunit to which N-formylmethionyl-tRNA(fMet) subsequently binds. Helps modulate mRNA selection, yielding the 30S pre-initiation complex (PIC). Upon addition of the 50S ribosomal subunit IF-1, IF-2 and IF-3 are released leaving the mature 70S translation initiation complex. The chain is Translation initiation factor IF-1 from Paracoccus denitrificans (strain Pd 1222).